The chain runs to 547 residues: uncharacterized protein (547 aa).

Over 1–19 (MVRLNHAASYFMPIFCSTR) the chain is Cytoplasmic. A helical membrane pass occupies residues 20–40 (PHIVILSALFSISLFSLFYAS). Residues 41 to 64 (SELLLHQYDDPLMFKPNSQDYFRT) lie on the Vacuolar side of the membrane. The chain crosses the membrane as a helical span at residues 65–85 (FLLGLFSPFLYYFLKTFLFNI). Residues 86–89 (NQRF) are Cytoplasmic-facing. The chain crosses the membrane as a helical span at residues 90–110 (LILNLIVDFPINDVFMLLILI). Topologically, residues 111 to 139 (GLAYPQVQDHEGGTIKHKECSWHIIPRQA) are vacuolar. The helical transmembrane segment at 140–160 (YIFGISWALGEFTICIIGNLF) threads the bilayer. The Cytoplasmic segment spans residues 161 to 340 (NYQEIADPNI…RFIAFSTAYQ (180 aa)). Serine 225 is subject to Phosphoserine. Residues 237–271 (PIKPLRSSSSTYGSIRQQPHENKKQLHVPDNSQDD) form a disordered region. Positions 242–253 (RSSSSTYGSIRQ) are enriched in polar residues. The helical transmembrane segment at 341–361 (LVTGLLLMILVVGSNIMLTIG) threads the bilayer. Topologically, residues 362-394 (ESLILSMYFVYVRGHEGLFTPVVNYFGSRTISN) are vacuolar. The helical transmembrane segment at 395–415 (FILCVIIPFISLNFLINTSIY) threads the bilayer. Over 416–523 (LRRELDDWFN…NWRALARNDS (108 aa)) the chain is Cytoplasmic. The chain crosses the membrane as a helical span at residues 524–544 (FVLGVMVSWSLLVFVTGILST). At 545-547 (VYI) the chain is on the vacuolar side.

The protein localises to the vacuole membrane. This is an uncharacterized protein from Saccharomyces cerevisiae (strain ATCC 204508 / S288c) (Baker's yeast).